A 192-amino-acid polypeptide reads, in one-letter code: Ubiquitin-conjugating enzyme E2 27 (192 aa).

The UBC core domain maps to 2–150 (IDFSRIQKEL…ARYWTETFAK (149 aa)). Cysteine 88 (glycyl thioester intermediate) is an active-site residue. In terms of domain architecture, UBA spans 153-192 (SLEEKVKRLVEMGFGDAQVRSAIESSGGDENLALEKLCSA).

It belongs to the ubiquitin-conjugating enzyme family. Expressed in seeds, pistils, siliques, hypocotyls and leaves.

It carries out the reaction S-ubiquitinyl-[E1 ubiquitin-activating enzyme]-L-cysteine + [E2 ubiquitin-conjugating enzyme]-L-cysteine = [E1 ubiquitin-activating enzyme]-L-cysteine + S-ubiquitinyl-[E2 ubiquitin-conjugating enzyme]-L-cysteine.. Its pathway is protein modification; protein ubiquitination. Its function is as follows. Accepts the ubiquitin from the E1 complex and catalyzes its covalent attachment to other proteins. In Arabidopsis thaliana (Mouse-ear cress), this protein is Ubiquitin-conjugating enzyme E2 27 (UBC27).